The primary structure comprises 520 residues: GMP synthase [glutamine-hydrolyzing] (520 aa).

The Glutamine amidotransferase type-1 domain occupies 12–202 (KIIVLDFGSQ…AFDVCGCTGD (191 aa)). Cys89 serves as the catalytic Nucleophile. Residues His176 and Glu178 contribute to the active site. One can recognise a GMPS ATP-PPase domain in the interval 203–395 (WSMENFIDME…LGMPDAIVWR (193 aa)). 230 to 236 (SGGVDSS) is a binding site for ATP.

Homodimer.

It carries out the reaction XMP + L-glutamine + ATP + H2O = GMP + L-glutamate + AMP + diphosphate + 2 H(+). Its pathway is purine metabolism; GMP biosynthesis; GMP from XMP (L-Gln route): step 1/1. Catalyzes the synthesis of GMP from XMP. The protein is GMP synthase [glutamine-hydrolyzing] of Enterococcus faecalis (strain ATCC 700802 / V583).